We begin with the raw amino-acid sequence, 227 residues long: 2,3-bisphosphoglycerate-dependent phosphoglycerate mutase (227 aa).

Substrate is bound by residues 7–14, 20–21, Arg59, 86–89, Lys97, 113–114, and 182–183; these read RHGQSEWN, TG, ERHY, RR, and GN. His8 serves as the catalytic Tele-phosphohistidine intermediate. The Proton donor/acceptor role is filled by Glu86.

This sequence belongs to the phosphoglycerate mutase family. BPG-dependent PGAM subfamily. As to quaternary structure, homodimer.

It carries out the reaction (2R)-2-phosphoglycerate = (2R)-3-phosphoglycerate. It functions in the pathway carbohydrate degradation; glycolysis; pyruvate from D-glyceraldehyde 3-phosphate: step 3/5. Catalyzes the interconversion of 2-phosphoglycerate and 3-phosphoglycerate. The polypeptide is 2,3-bisphosphoglycerate-dependent phosphoglycerate mutase (Neisseria meningitidis serogroup B (strain ATCC BAA-335 / MC58)).